Reading from the N-terminus, the 432-residue chain is Anaerobic glycerol-3-phosphate dehydrogenase subunit B (432 aa).

Belongs to the anaerobic G-3-P dehydrogenase subunit B family. As to quaternary structure, composed of a catalytic GlpA/B dimer and of membrane bound GlpC. Requires FMN as cofactor.

The catalysed reaction is a quinone + sn-glycerol 3-phosphate = dihydroxyacetone phosphate + a quinol. Its pathway is polyol metabolism; glycerol degradation via glycerol kinase pathway; glycerone phosphate from sn-glycerol 3-phosphate (anaerobic route): step 1/1. Its function is as follows. Conversion of glycerol 3-phosphate to dihydroxyacetone. Uses fumarate or nitrate as electron acceptor. The protein is Anaerobic glycerol-3-phosphate dehydrogenase subunit B of Haemophilus influenzae (strain 86-028NP).